The following is a 237-amino-acid chain: Ribosomal RNA small subunit methyltransferase G (237 aa).

Residues G78, F83, 129–130 (AE), and R148 each bind S-adenosyl-L-methionine. The interval 216–237 (SKKKETPNKYPRKAGTPNKKPL) is disordered.

The protein belongs to the methyltransferase superfamily. RNA methyltransferase RsmG family.

The protein localises to the cytoplasm. Functionally, specifically methylates the N7 position of a guanine in 16S rRNA. In Streptococcus agalactiae serotype V (strain ATCC BAA-611 / 2603 V/R), this protein is Ribosomal RNA small subunit methyltransferase G.